The primary structure comprises 142 residues: Ribosome-binding factor A (142 aa).

Residues 119 to 142 (EAKQKQHGVETDAEQGDTKEEGDK) form a disordered region.

It belongs to the RbfA family. In terms of assembly, monomer. Binds 30S ribosomal subunits, but not 50S ribosomal subunits or 70S ribosomes.

The protein localises to the cytoplasm. Its function is as follows. One of several proteins that assist in the late maturation steps of the functional core of the 30S ribosomal subunit. Associates with free 30S ribosomal subunits (but not with 30S subunits that are part of 70S ribosomes or polysomes). Required for efficient processing of 16S rRNA. May interact with the 5'-terminal helix region of 16S rRNA. The protein is Ribosome-binding factor A of Shewanella pealeana (strain ATCC 700345 / ANG-SQ1).